The sequence spans 232 residues: LexA repressor (232 aa).

The H-T-H motif DNA-binding region spans 35–55; that stretch reads IREIGDAAGLQSTSSVAYQLK. Positions 61-85 are enriched in basic and acidic residues; it reads GFLRRDPNKPRAVDVRHLPETESRS. Residues 61-104 form a disordered region; it reads GFLRRDPNKPRAVDVRHLPETESRSSKAATQAKSKAPQAGVHDP. Residues 86–99 are compositionally biased toward low complexity; sequence SKAATQAKSKAPQA. Catalysis depends on for autocatalytic cleavage activity residues serine 156 and lysine 193.

It belongs to the peptidase S24 family. As to quaternary structure, homodimer.

It carries out the reaction Hydrolysis of Ala-|-Gly bond in repressor LexA.. Its function is as follows. Represses a number of genes involved in the response to DNA damage (SOS response), including recA and lexA. In the presence of single-stranded DNA, RecA interacts with LexA causing an autocatalytic cleavage which disrupts the DNA-binding part of LexA, leading to derepression of the SOS regulon and eventually DNA repair. The sequence is that of LexA repressor from Corynebacterium glutamicum (strain ATCC 13032 / DSM 20300 / JCM 1318 / BCRC 11384 / CCUG 27702 / LMG 3730 / NBRC 12168 / NCIMB 10025 / NRRL B-2784 / 534).